Consider the following 427-residue polypeptide: Putative F-box protein At4g10740 (427 aa).

Residues 2–47 enclose the F-box domain; sequence RTTMSNLPKELVEDIVSRVPLHCLRAMRLTCKNWNALLESQSFKKM.

In Arabidopsis thaliana (Mouse-ear cress), this protein is Putative F-box protein At4g10740.